The sequence spans 579 residues: Acetolactate synthase (579 aa).

Residue E61 coordinates thiamine diphosphate. FAD contacts are provided by residues R163, 274–295, and 317–336; these read HGTA…VGVR and DIDP…IVGD. Positions 408-487 are thiamine pyrophosphate binding; it reads QHQMWAGQFV…VKVIILNNGW (80 aa). Mg(2+) contacts are provided by D458 and N485.

This sequence belongs to the TPP enzyme family. Requires Mg(2+) as cofactor. Thiamine diphosphate serves as cofactor.

It carries out the reaction 2 pyruvate + H(+) = (2S)-2-acetolactate + CO2. The protein operates within amino-acid biosynthesis; L-isoleucine biosynthesis; L-isoleucine from 2-oxobutanoate: step 1/4. Its pathway is amino-acid biosynthesis; L-valine biosynthesis; L-valine from pyruvate: step 1/4. This is Acetolactate synthase (ilvY) from Arthrospira platensis (Spirulina platensis).